A 233-amino-acid polypeptide reads, in one-letter code: 5'-methylthioadenosine/S-adenosylhomocysteine nucleosidase (233 aa).

E12 (proton acceptor) is an active-site residue. Substrate is bound by residues G78, I152, and 173–174 (ME). D197 acts as the Proton donor in catalysis.

Belongs to the PNP/UDP phosphorylase family. MtnN subfamily. In terms of assembly, homodimer.

The catalysed reaction is S-adenosyl-L-homocysteine + H2O = S-(5-deoxy-D-ribos-5-yl)-L-homocysteine + adenine. It carries out the reaction S-methyl-5'-thioadenosine + H2O = 5-(methylsulfanyl)-D-ribose + adenine. The enzyme catalyses 5'-deoxyadenosine + H2O = 5-deoxy-D-ribose + adenine. The protein operates within amino-acid biosynthesis; L-methionine biosynthesis via salvage pathway; S-methyl-5-thio-alpha-D-ribose 1-phosphate from S-methyl-5'-thioadenosine (hydrolase route): step 1/2. In terms of biological role, catalyzes the irreversible cleavage of the glycosidic bond in both 5'-methylthioadenosine (MTA) and S-adenosylhomocysteine (SAH/AdoHcy) to adenine and the corresponding thioribose, 5'-methylthioribose and S-ribosylhomocysteine, respectively. Also cleaves 5'-deoxyadenosine, a toxic by-product of radical S-adenosylmethionine (SAM) enzymes, into 5-deoxyribose and adenine. Thus, is required for in vivo function of the radical SAM enzymes biotin synthase and lipoic acid synthase, that are inhibited by 5'-deoxyadenosine accumulation. This is 5'-methylthioadenosine/S-adenosylhomocysteine nucleosidase from Yersinia pestis bv. Antiqua (strain Antiqua).